A 98-amino-acid polypeptide reads, in one-letter code: NADH-ubiquinone oxidoreductase chain 4L (98 aa).

2 helical membrane-spanning segments follow: residues serine 29–leucine 49 and isoleucine 61–valine 81.

This sequence belongs to the complex I subunit 4L family. Core subunit of respiratory chain NADH dehydrogenase (Complex I) which is composed of 45 different subunits.

The protein localises to the mitochondrion inner membrane. It carries out the reaction a ubiquinone + NADH + 5 H(+)(in) = a ubiquinol + NAD(+) + 4 H(+)(out). In terms of biological role, core subunit of the mitochondrial membrane respiratory chain NADH dehydrogenase (Complex I) which catalyzes electron transfer from NADH through the respiratory chain, using ubiquinone as an electron acceptor. Part of the enzyme membrane arm which is embedded in the lipid bilayer and involved in proton translocation. The chain is NADH-ubiquinone oxidoreductase chain 4L (MT-ND4L) from Cheirogaleus medius (Fat-tailed dwarf lemur).